Consider the following 315-residue polypeptide: Methionyl-tRNA formyltransferase (315 aa).

113–116 (SLLP) provides a ligand contact to (6S)-5,6,7,8-tetrahydrofolate.

This sequence belongs to the Fmt family.

It catalyses the reaction L-methionyl-tRNA(fMet) + (6R)-10-formyltetrahydrofolate = N-formyl-L-methionyl-tRNA(fMet) + (6S)-5,6,7,8-tetrahydrofolate + H(+). In terms of biological role, attaches a formyl group to the free amino group of methionyl-tRNA(fMet). The formyl group appears to play a dual role in the initiator identity of N-formylmethionyl-tRNA by promoting its recognition by IF2 and preventing the misappropriation of this tRNA by the elongation apparatus. This Shigella dysenteriae serotype 1 (strain Sd197) protein is Methionyl-tRNA formyltransferase.